A 460-amino-acid chain; its full sequence is GTPase Der (460 aa).

2 EngA-type G domains span residues 3 to 167 and 189 to 364; these read FTFA…PEPD and IRVA…ATWN. GTP is bound by residues 9-16, 56-60, 119-122, 195-202, 242-246, and 307-310; these read GRPNVGKS, DTAGL, NKSE, GRPNAGKS, and NKWD. The KH-like domain maps to 365–449; the sequence is RRVPTAALNR…PVRIMLREKA (85 aa).

The protein belongs to the TRAFAC class TrmE-Era-EngA-EngB-Septin-like GTPase superfamily. EngA (Der) GTPase family. In terms of assembly, associates with the 50S ribosomal subunit.

GTPase that plays an essential role in the late steps of ribosome biogenesis. This chain is GTPase Der, found in Rhodopseudomonas palustris (strain BisA53).